The primary structure comprises 317 residues: Melanocyte-stimulating hormone receptor (317 aa).

The Extracellular segment spans residues 1–37 (MPAQGSQRGLLGAVNFTPTATPHLRPAANQTGPQCLE). N-linked (GlcNAc...) asparagine glycosylation is present at asparagine 29. The chain crosses the membrane as a helical span at residues 38–63 (VSVPDGLFLCLGLVSLVENTLVVAAI). The Cytoplasmic segment spans residues 64–72 (AKNRNLHSP). Residues 73–93 (MYCFICCLALSDLLVSVSNLL) traverse the membrane as a helical segment. Residues 94–118 (ETAVLLLLEVGALAAQATVVQQLGN) lie on the Extracellular side of the membrane. The helical transmembrane segment at 119-140 (VIDVLICSSMVSSLCSLGAIAM) threads the bilayer. Residues 141–163 (DRYISIFYALRYHSIVTLARARR) are Cytoplasmic-facing. A helical membrane pass occupies residues 164-183 (AIAAVWAASILSSTLFITYY). Residues 184 to 191 (DRTAALLC) lie on the Extracellular side of the membrane. A helical transmembrane segment spans residues 192-211 (LVVFFLAMLVLMALLYVHML). Over 212-240 (IQACQHAQAIARLHKRQHPVQQGWGLKGA) the chain is Cytoplasmic. The helical transmembrane segment at 241–266 (ATLTILLGVFFLCWGPFFLHLTLIAV) threads the bilayer. At 267-279 (CPQHPTCSCIFKN) the chain is on the extracellular side. The chain crosses the membrane as a helical span at residues 280–300 (FRLFLALIICNTIVDPLIYAF). Residues 301–317 (RSQELRRTLKEVLLFSW) are Cytoplasmic-facing.

The protein belongs to the G-protein coupled receptor 1 family. In terms of assembly, interacts with MGRN1, but does not undergo MGRN1-mediated ubiquitination; this interaction competes with GNAS-binding and thus inhibits agonist-induced cAMP production. Interacts with OPN3; the interaction results in a decrease in MC1R-mediated cAMP signaling and ultimately a decrease in melanin production in melanocytes.

It localises to the cell membrane. Receptor for MSH (alpha, beta and gamma) and ACTH. The activity of this receptor is mediated by G proteins which activate adenylate cyclase. Mediates melanogenesis, the production of eumelanin (black/brown) and phaeomelanin (red/yellow), via regulation of cAMP signaling in melanocytes. The chain is Melanocyte-stimulating hormone receptor (MC1R) from Eulemur fulvus fulvus (Brown lemur).